A 268-amino-acid chain; its full sequence is 4-hydroxy-tetrahydrodipicolinate reductase (268 aa).

NAD(+) contacts are provided by residues 7 to 12 (GAGGRM) and glutamate 33. Arginine 34 contacts NADP(+). Residues 97-99 (GTT) and 121-124 (SGNM) contribute to the NAD(+) site. The Proton donor/acceptor role is filled by histidine 155. Histidine 156 provides a ligand contact to (S)-2,3,4,5-tetrahydrodipicolinate. Residue lysine 159 is the Proton donor of the active site. (S)-2,3,4,5-tetrahydrodipicolinate is bound at residue 165–166 (GT).

This sequence belongs to the DapB family.

Its subcellular location is the cytoplasm. It catalyses the reaction (S)-2,3,4,5-tetrahydrodipicolinate + NAD(+) + H2O = (2S,4S)-4-hydroxy-2,3,4,5-tetrahydrodipicolinate + NADH + H(+). The catalysed reaction is (S)-2,3,4,5-tetrahydrodipicolinate + NADP(+) + H2O = (2S,4S)-4-hydroxy-2,3,4,5-tetrahydrodipicolinate + NADPH + H(+). Its pathway is amino-acid biosynthesis; L-lysine biosynthesis via DAP pathway; (S)-tetrahydrodipicolinate from L-aspartate: step 4/4. Its function is as follows. Catalyzes the conversion of 4-hydroxy-tetrahydrodipicolinate (HTPA) to tetrahydrodipicolinate. The chain is 4-hydroxy-tetrahydrodipicolinate reductase from Brucella melitensis biotype 1 (strain ATCC 23456 / CCUG 17765 / NCTC 10094 / 16M).